The following is a 70-amino-acid chain: Large ribosomal subunit protein eL38 (70 aa).

It belongs to the eukaryotic ribosomal protein eL38 family.

In Lonomia obliqua (Moth), this protein is Large ribosomal subunit protein eL38 (RpL38).